A 632-amino-acid chain; its full sequence is Phosphatidylinositol-3,5-bisphosphate 3-phosphatase MTMR8 (632 aa).

In terms of domain architecture, Myotubularin phosphatase spans 126–500; sequence GWELISVVND…LHFKFWCGMY (375 aa). 3 residues coordinate a 1,2-diacyl-sn-glycero-3-phospho-(1D-myo-inositol-3,5-bisphosphate): Asn-250, Asn-275, and Ile-276. Residues Asn-250, Asn-275, and Ile-276 each contribute to the a 1,2-diacyl-sn-glycero-3-phospho-(1D-myo-inositol-3-phosphate) site. The active-site Phosphocysteine intermediate is the Cys-338. Residues Ser-339, Asp-340, Gly-341, Trp-342, Asp-343, Arg-344, Lys-380, and Arg-384 each coordinate a 1,2-diacyl-sn-glycero-3-phospho-(1D-myo-inositol-3,5-bisphosphate). Ser-339, Asp-340, Gly-341, Trp-342, Asp-343, and Arg-344 together coordinate a 1,2-diacyl-sn-glycero-3-phospho-(1D-myo-inositol-3-phosphate). Phosphate contacts are provided by Ser-339 and Asp-340. Trp-342, Asp-343, and Arg-344 together coordinate phosphate. Arg-384 provides a ligand contact to a 1,2-diacyl-sn-glycero-3-phospho-(1D-myo-inositol-3-phosphate). Residues 545–632 are disordered; sequence LPDPAGPINT…HSKEEVQESS (88 aa). The span at 602–632 shows a compositional bias: basic and acidic residues; that stretch reads EPAANEHDLSSKDKPVFVETEHSKEEVQESS.

The protein belongs to the protein-tyrosine phosphatase family. Non-receptor class myotubularin subfamily. In terms of assembly, homodimer.

The protein localises to the nucleus envelope. The enzyme catalyses a 1,2-diacyl-sn-glycero-3-phospho-(1D-myo-inositol-3,5-bisphosphate) + H2O = a 1,2-diacyl-sn-glycero-3-phospho-(1D-myo-inositol-5-phosphate) + phosphate. It catalyses the reaction a 1,2-diacyl-sn-glycero-3-phospho-(1D-myo-inositol-3-phosphate) + H2O = a 1,2-diacyl-sn-glycero-3-phospho-(1D-myo-inositol) + phosphate. The catalysed reaction is 1,2-dioctanoyl-sn-glycero-3-phospho-(1D-myo-inositol-3,5-bisphosphate) + H2O = 1,2-dioctanoyl-sn-glycero-3-phospho-(1D-myo-inositol-5-phosphate) + phosphate. Lipid phosphatase that specifically dephosphorylates the D-3 position of phosphatidylinositol 3-phosphate and phosphatidylinositol 3,5-bisphosphate, generating phosphatidylinositol and phosphatidylinositol 5-phosphate. This chain is Phosphatidylinositol-3,5-bisphosphate 3-phosphatase MTMR8 (mtmr8), found in Danio rerio (Zebrafish).